A 477-amino-acid polypeptide reads, in one-letter code: Endoglucanase A (477 aa).

The first 32 residues, 1–32 (MKNVKKRVGVVLLILAVLGVYMLAMPANTVSA), serve as a signal peptide directing secretion. Glu-95 serves as the catalytic Proton donor. Asp-152 serves as the catalytic Nucleophile. The 67-residue stretch at 411 to 477 (PQVVYGDVNG…LIKSIPHLPY (67 aa)) folds into the Dockerin domain.

It belongs to the glycosyl hydrolase 8 (cellulase D) family.

It carries out the reaction Endohydrolysis of (1-&gt;4)-beta-D-glucosidic linkages in cellulose, lichenin and cereal beta-D-glucans.. Its function is as follows. This enzyme catalyzes the endohydrolysis of 1,4-beta-glucosidic linkages in cellulose, lichenin and cereal beta-D-glucans. This is Endoglucanase A (celA) from Acetivibrio thermocellus (strain ATCC 27405 / DSM 1237 / JCM 9322 / NBRC 103400 / NCIMB 10682 / NRRL B-4536 / VPI 7372) (Clostridium thermocellum).